A 496-amino-acid polypeptide reads, in one-letter code: Apolipoprotein N-acyltransferase (496 aa).

A run of 6 helical transmembrane segments spans residues 6–26 (IICL…FFIP), 50–70 (FGYL…SIGV), 77–97 (FWWA…FFIS), 114–134 (LIFC…LTGL), 148–168 (ILIQ…VIYI), and 183–203 (LKIL…YGAV). A CN hydrolase domain is found at 220-464 (VQPSIPQTAK…QGLIPQKLTT (245 aa)). The active-site Proton acceptor is Glu-259. Lys-322 is a catalytic residue. Catalysis depends on Cys-372, which acts as the Nucleophile. A helical transmembrane segment spans residues 474–494 (FAMLLSIVFIILIHYLLSLIF).

The protein belongs to the CN hydrolase family. Apolipoprotein N-acyltransferase subfamily.

The protein resides in the cell inner membrane. The enzyme catalyses N-terminal S-1,2-diacyl-sn-glyceryl-L-cysteinyl-[lipoprotein] + a glycerophospholipid = N-acyl-S-1,2-diacyl-sn-glyceryl-L-cysteinyl-[lipoprotein] + a 2-acyl-sn-glycero-3-phospholipid + H(+). The protein operates within protein modification; lipoprotein biosynthesis (N-acyl transfer). Its function is as follows. Catalyzes the phospholipid dependent N-acylation of the N-terminal cysteine of apolipoprotein, the last step in lipoprotein maturation. This chain is Apolipoprotein N-acyltransferase, found in Rickettsia prowazekii (strain Madrid E).